The primary structure comprises 50 residues: Protein hunchback (50 aa).

C2H2-type zinc fingers lie at residues histidine 1–histidine 5, phenylalanine 11–histidine 33, and tyrosine 39–tyrosine 50.

The protein belongs to the hunchback C2H2-type zinc-finger protein family.

It localises to the nucleus. Gap class segmentation protein that controls development of head structures. The polypeptide is Protein hunchback (hb) (Schultesia lampyridiformis (Firefly mimic roach)).